Consider the following 281-residue polypeptide: 2-dehydro-3-deoxyphosphooctonate aldolase (281 aa).

Belongs to the KdsA family.

Its subcellular location is the cytoplasm. The enzyme catalyses D-arabinose 5-phosphate + phosphoenolpyruvate + H2O = 3-deoxy-alpha-D-manno-2-octulosonate-8-phosphate + phosphate. Its pathway is carbohydrate biosynthesis; 3-deoxy-D-manno-octulosonate biosynthesis; 3-deoxy-D-manno-octulosonate from D-ribulose 5-phosphate: step 2/3. It participates in bacterial outer membrane biogenesis; lipopolysaccharide biosynthesis. In Pseudomonas putida (strain GB-1), this protein is 2-dehydro-3-deoxyphosphooctonate aldolase.